The primary structure comprises 81 residues: Trefoil factor 1 (81 aa).

The N-terminal stretch at 1–23 (MEHRVIYVLVLVCALTLSSLAQG) is a signal peptide. Residues 26–69 (ETCTVAPHHRDNCGSPGITPSQCKDKGCCFDNTVRGVPWCYYPV) enclose the P-type domain. 3 disulfide bridges follow: Cys28-Cys54, Cys38-Cys53, and Cys48-Cys65.

It localises to the secreted. Functionally, stabilizer of the mucous gel overlying the gastrointestinal mucosa that provides a physical barrier against various noxious agents. This Canis lupus familiaris (Dog) protein is Trefoil factor 1 (TFF1).